The following is a 206-amino-acid chain: Insecticyanin-B (206 aa).

The signal sequence occupies residues 1-17 (MQRFLVFTIVAVATAAA). Intrachain disulfides connect C26–C136 and C60–C192.

Belongs to the calycin superfamily. Lipocalin family. As to quaternary structure, homotetramer. Synthesized only in the caterpillars, apparently by the epidermis and secreted into the hemolymph. The protein is passed over from the larval hemolymph to that of pupae and adults and is sequestered in the eggs.

The protein localises to the secreted. Functionally, this protein binds a chromophore: biliverdin IX, isomer gamma. Mixed with lipoprotein-bound carotenes, this blue protein provides hornworms with their green cryptic coloration which serves a camouflage. The polypeptide is Insecticyanin-B (INSB) (Manduca sexta (Tobacco hawkmoth)).